The primary structure comprises 241 residues: MDRRSRPQLGRRARHNYNDLCPPIGRRAATALLWLSCSIALLRALATSSTRAQQRAAAQRRTFLNAHHRSAAQVFPEPPESDHEDTDFEPSLPECPEYQEEEFDYESETESESEIESETEFETESDTAPTTEPETEPEDEPGPVVPKRPTFHQSLTERLSALRLRSPDASPSRAPPSTQESESPRQGEEPEDKDPRDPEESEEPKEEEKQQQHRCKPKKPTRRDPSPESPSKRGAIPIRRH.

Positions 1-46 are cleaved as a signal peptide; the sequence is MDRRSRPQLGRRARHNYNDLCPPIGRRAATALLWLSCSIALLRALA. The interval 71-241 is disordered; that stretch reads AAQVFPEPPE…KRGAIPIRRH (171 aa). Acidic residues predominate over residues 97–125; the sequence is EYQEEEFDYESETESESEIESETEFETES. A compositionally biased stretch (low complexity) spans 167–177; sequence PDASPSRAPPS. Over residues 182-198 the composition is skewed to basic and acidic residues; it reads ESPRQGEEPEDKDPRDP. The segment covering 212-221 has biased composition (basic residues); sequence QHRCKPKKPT.

The protein belongs to the NESP55 family. Post-translationally, binds keratan sulfate chains. May be proteolytically processed to give rise to a number of active peptides. In terms of tissue distribution, highly expressed in adrenal medulla and anterior and posterior pituitary. In the brain, detected in hypothalamus, hippocampus, caudate nucleus, thalamus and, in significantly lower amounts, in the cerebellum.

It is found in the cytoplasmic vesicle. Its subcellular location is the secretory vesicle. It localises to the secreted. The polypeptide is Neuroendocrine secretory protein 55 (Bos taurus (Bovine)).